A 195-amino-acid polypeptide reads, in one-letter code: Xanthine phosphoribosyltransferase (195 aa).

Leu-20 and Asn-27 together coordinate xanthine. 128 to 132 (ANGQA) is a binding site for 5-phospho-alpha-D-ribose 1-diphosphate. Xanthine is bound at residue Lys-156.

The protein belongs to the purine/pyrimidine phosphoribosyltransferase family. Xpt subfamily. Homodimer.

It localises to the cytoplasm. The enzyme catalyses XMP + diphosphate = xanthine + 5-phospho-alpha-D-ribose 1-diphosphate. It participates in purine metabolism; XMP biosynthesis via salvage pathway; XMP from xanthine: step 1/1. Functionally, converts the preformed base xanthine, a product of nucleic acid breakdown, to xanthosine 5'-monophosphate (XMP), so it can be reused for RNA or DNA synthesis. This Lactiplantibacillus plantarum (strain ATCC BAA-793 / NCIMB 8826 / WCFS1) (Lactobacillus plantarum) protein is Xanthine phosphoribosyltransferase.